A 338-amino-acid chain; its full sequence is MAAAAAGPVAAASRLFRSFSDALIEQDPQAALEELTKALEQKPDDAPYYCQRAYCHILLGNYSDAVADAKKSLELNPNSSTALLRKGICEYHEKNYAAALETFTEGQKLNSADADLTAWIKRCQEAQNGSQPEVSASQRTHQSKIKYDWYQTESQVIITLMIKNVQKNDVNVEFSEKELSALVKLPSGDDYSLKLRLLHPIIPEQSTFKVLSTKIEIKMKKPEAVRWEKLEGQGDVPNPKPFIADVKNLYPSSSHYTRNWDKLVGEIKEEEKNEKLEGDAALNKLFQQIYSDGSDEVKRAMNKSFMESGGTVLSTNWSDVGKRKVEINPPDDMEWKKY.

N-acetylalanine is present on alanine 2. 3 TPR repeats span residues 11 to 45 (AASRLFRSFSDALIEQDPQAALEELTKALEQKPDD), 46 to 79 (APYYCQRAYCHILLGNYSDAVADAKKSLELNPNS), and 80 to 113 (STALLRKGICEYHEKNYAAALETFTEGQKLNSAD). The CS domain maps to 142–231 (QSKIKYDWYQ…PEAVRWEKLE (90 aa)). The SGS domain maps to 249-338 (LYPSSSHYTR…PPDDMEWKKY (90 aa)). The residue at position 254 (serine 254) is a Phosphoserine. Threonine 257 is modified (phosphothreonine). A Glycyl lysine isopeptide (Lys-Gly) (interchain with G-Cter in SUMO1); alternate cross-link involves residue lysine 268. Lysine 268 participates in a covalent cross-link: Glycyl lysine isopeptide (Lys-Gly) (interchain with G-Cter in SUMO2); alternate. The residue at position 304 (serine 304) is a Phosphoserine.

This sequence belongs to the SGT1 family. In terms of assembly, probably associates with SCF (SKP1-CUL1-F-box protein) complex through interaction with SKP1. Interacts with S100A6. Interacts with HSP90. Phosphorylated at Ser-254 and Ser-304, dephosphorylation promotes nuclear translocation, most likely due to disruption of the SUGT1-HSP90 complex.

Its subcellular location is the cytoplasm. The protein localises to the nucleus. Functionally, may play a role in ubiquitination and subsequent proteasomal degradation of target proteins. The protein is Protein SGT1 homolog of Bos taurus (Bovine).